The chain runs to 142 residues: uncharacterized protein (142 aa).

Residues 1–20 form the signal peptide; the sequence is MPSVNEFFIFFLIVWHTCEC. Asparagine 80 is a glycosylation site (N-linked (GlcNAc...) asparagine).

This is an uncharacterized protein from Dictyostelium discoideum (Social amoeba).